Reading from the N-terminus, the 372-residue chain is L-selectin (372 aa).

Residues 1–28 (MVFPWRCQSAQRGSWSFLKLWIRTLLCC) form the signal peptide. Residues 29-38 (DLLPHHGTHC) constitute a propeptide that is removed on maturation. Residues 39-332 (WTYHYSERSM…FSKIKEGDYN (294 aa)) are Extracellular-facing. The C-type lectin domain maps to 55–155 (KFCKHNYTDL…ACHKRKAALC (101 aa)). 10 cysteine pairs are disulfide-bonded: C57/C155, C128/C147, C128/C160, C160/C171, C165/C180, C182/C191, C197/C241, C227/C254, C259/C303, and C289/C316. 2 N-linked (GlcNAc...) asparagine glycosylation sites follow: N60 and N104. E118, N120, E126, N143, and D144 together coordinate Ca(2+). Residues 156–192 (YTASCQPESCNRHGECVETINNNTCICDPGYYGPQCQ) form the EGF-like domain. The N-linked (GlcNAc...) asparagine glycan is linked to N177. 2 Sushi domains span residues 195–256 (IQCE…ICQV) and 257–318 (IQCM…ICQK). N226, N246, and N278 each carry an N-linked (GlcNAc...) asparagine glycan. Residues 333 to 355 (PLFIPVAVMVTAFSGLAFIIWLA) traverse the membrane as a helical segment. Over 356-372 (RRLKKGKKSQERMDDPY) the chain is Cytoplasmic.

Belongs to the selectin/LECAM family. In terms of assembly, interaction with SELPLG/PSGL1 and PODXL2 is required for promoting recruitment and rolling of leukocytes. This interaction is dependent on the sialyl Lewis X glycan modification of SELPLG and PODXL2, and tyrosine sulfation modifications of SELPLG. Sulfation on 'Tyr-51' of SELPLG is important for L-selectin binding. In terms of processing, N-glycosylated. As to expression, expressed in peripheral blood mononuclear cells (PBMC), spleen and thymus.

The protein localises to the cell membrane. Functionally, calcium-dependent lectin that mediates cell adhesion by binding to glycoproteins on neighboring cells. Mediates the adherence of lymphocytes to endothelial cells of high endothelial venules in peripheral lymph nodes. Promotes initial tethering and rolling of leukocytes in endothelia. The chain is L-selectin (Sell) from Rattus norvegicus (Rat).